Reading from the N-terminus, the 947-residue chain is Bifunctional glutamine synthetase adenylyltransferase/adenylyl-removing enzyme (947 aa).

The tract at residues 1-440 (MTPLSSPLSQ…VFNELIGDDE (440 aa)) is adenylyl removase. The segment at 450–947 (SEPWREVWQD…ASWRKWLVAV (498 aa)) is adenylyl transferase.

This sequence belongs to the GlnE family. It depends on Mg(2+) as a cofactor.

It carries out the reaction [glutamine synthetase]-O(4)-(5'-adenylyl)-L-tyrosine + phosphate = [glutamine synthetase]-L-tyrosine + ADP. The enzyme catalyses [glutamine synthetase]-L-tyrosine + ATP = [glutamine synthetase]-O(4)-(5'-adenylyl)-L-tyrosine + diphosphate. Involved in the regulation of glutamine synthetase GlnA, a key enzyme in the process to assimilate ammonia. When cellular nitrogen levels are high, the C-terminal adenylyl transferase (AT) inactivates GlnA by covalent transfer of an adenylyl group from ATP to specific tyrosine residue of GlnA, thus reducing its activity. Conversely, when nitrogen levels are low, the N-terminal adenylyl removase (AR) activates GlnA by removing the adenylyl group by phosphorolysis, increasing its activity. The regulatory region of GlnE binds the signal transduction protein PII (GlnB) which indicates the nitrogen status of the cell. The polypeptide is Bifunctional glutamine synthetase adenylyltransferase/adenylyl-removing enzyme (Salmonella schwarzengrund (strain CVM19633)).